The sequence spans 284 residues: uncharacterized protein (284 aa).

This sequence belongs to the AtsA family.

This is an uncharacterized protein from Mycobacterium leprae (strain TN).